Consider the following 113-residue polypeptide: MANFISLKKNEDILDTIKKQQKIHSNQIVVYFRKTNLKNVRLAISISKKKFKLATQRNRIRRLIKAWFIAADIPIKSYDIVVLVKPSFIDGSFVLNCNNLKIILQRIINKEKR.

The protein belongs to the RnpA family. In terms of assembly, consists of a catalytic RNA component (M1 or rnpB) and a protein subunit.

The catalysed reaction is Endonucleolytic cleavage of RNA, removing 5'-extranucleotides from tRNA precursor.. RNaseP catalyzes the removal of the 5'-leader sequence from pre-tRNA to produce the mature 5'-terminus. It can also cleave other RNA substrates such as 4.5S RNA. The protein component plays an auxiliary but essential role in vivo by binding to the 5'-leader sequence and broadening the substrate specificity of the ribozyme. This chain is Ribonuclease P protein component, found in Ureaplasma parvum serovar 3 (strain ATCC 27815 / 27 / NCTC 11736).